We begin with the raw amino-acid sequence, 290 residues long: 4-diphosphocytidyl-2-C-methyl-D-erythritol kinase (290 aa).

The active site involves lysine 13. 96–106 (PMGGGIGGGSS) is a binding site for ATP. Residue aspartate 138 is part of the active site.

Belongs to the GHMP kinase family. IspE subfamily.

It carries out the reaction 4-CDP-2-C-methyl-D-erythritol + ATP = 4-CDP-2-C-methyl-D-erythritol 2-phosphate + ADP + H(+). It functions in the pathway isoprenoid biosynthesis; isopentenyl diphosphate biosynthesis via DXP pathway; isopentenyl diphosphate from 1-deoxy-D-xylulose 5-phosphate: step 3/6. Functionally, catalyzes the phosphorylation of the position 2 hydroxy group of 4-diphosphocytidyl-2C-methyl-D-erythritol. This Vibrio campbellii (strain ATCC BAA-1116) protein is 4-diphosphocytidyl-2-C-methyl-D-erythritol kinase.